Reading from the N-terminus, the 78-residue chain is Putative membrane protein insertion efficiency factor (78 aa).

The protein belongs to the UPF0161 family.

It localises to the cell membrane. Could be involved in insertion of integral membrane proteins into the membrane. The protein is Putative membrane protein insertion efficiency factor of Bacillus mycoides (strain KBAB4) (Bacillus weihenstephanensis).